A 432-amino-acid chain; its full sequence is Ectonucleoside triphosphate diphosphohydrolase 5 (432 aa).

An N-terminal signal peptide occupies residues 1-24 (MALYQGAAFFMLVASCVCSTVFHR). Catalysis depends on Glu-175, which acts as the Proton acceptor. Asn-235 is a glycosylation site (N-linked (GlcNAc...) asparagine). 2 disulfide bridges follow: Cys-275–Cys-307 and Cys-367–Cys-381. Asn-372 carries an N-linked (GlcNAc...) asparagine glycan.

This sequence belongs to the GDA1/CD39 NTPase family. Monomer; active form. Homodimer; disulfide-linked. Homodimers are enzymatically inactive. It depends on Ca(2+) as a cofactor. Requires Mg(2+) as cofactor. In terms of processing, N-glycosylated; high-mannose type.

It localises to the endoplasmic reticulum. It is found in the secreted. It catalyses the reaction a ribonucleoside 5'-diphosphate + H2O = a ribonucleoside 5'-phosphate + phosphate + H(+). It carries out the reaction GDP + H2O = GMP + phosphate + H(+). The catalysed reaction is UDP + H2O = UMP + phosphate + H(+). The enzyme catalyses IDP + H2O = IMP + phosphate + H(+). It catalyses the reaction CDP + H2O = CMP + phosphate + H(+). It carries out the reaction ADP + H2O = AMP + phosphate + H(+). It functions in the pathway protein modification; protein glycosylation. Hydrolyzes nucleoside diphosphates with a preference for GDP, IDP and UDP compared to ADP and CDP. In the lumen of the endoplasmic reticulum, hydrolyzes UDP that acts as an end-product feedback inhibitor of the UDP-Glc:glycoprotein glucosyltransferases. UMP can be transported back by an UDP-sugar antiporter to the cytosol where it is consumed to regenerate UDP-glucose. Therefore, it positively regulates protein reglucosylation by clearing UDP from the ER lumen and by promoting the regeneration of UDP-glucose. Protein reglucosylation is essential to proper glycoprotein folding and quality control in the ER. The polypeptide is Ectonucleoside triphosphate diphosphohydrolase 5 (ENTPD5) (Bos taurus (Bovine)).